A 222-amino-acid polypeptide reads, in one-letter code: Tetratricopeptide repeat protein 9A (222 aa).

Disordered stretches follow at residues 1–49 and 88–116; these read MERK…AAAE and KGLL…GRLS. Residues 56 to 89 form a TPR 1 repeat; the sequence is RAHEFKSQGAQCYKDKKFREAIGKYHRALLELKG. Ser-105 carries the phosphoserine modification. 2 TPR repeats span residues 125-160 and 161-194; these read AIEI…LKKE and GENF…RTQQ.

It belongs to the TTC9 family.

This chain is Tetratricopeptide repeat protein 9A (TTC9), found in Homo sapiens (Human).